A 216-amino-acid chain; its full sequence is Uracil-DNA glycosylase (216 aa).

Aspartate 59 functions as the Proton acceptor in the catalytic mechanism.

The protein belongs to the uracil-DNA glycosylase (UDG) superfamily. UNG family.

It localises to the cytoplasm. It catalyses the reaction Hydrolyzes single-stranded DNA or mismatched double-stranded DNA and polynucleotides, releasing free uracil.. Excises uracil residues from the DNA which can arise as a result of misincorporation of dUMP residues by DNA polymerase or due to deamination of cytosine. This is Uracil-DNA glycosylase from Staphylococcus epidermidis (strain ATCC 12228 / FDA PCI 1200).